The following is a 428-amino-acid chain: Adenylosuccinate synthetase (428 aa).

GTP contacts are provided by residues 12-18 (GDEGKGK) and 40-42 (GHT). Catalysis depends on aspartate 13, which acts as the Proton acceptor. Mg(2+) is bound by residues aspartate 13 and glycine 40. Residues 13–16 (DEGK), 38–41 (NAGH), threonine 128, arginine 142, glutamine 222, threonine 237, and arginine 301 contribute to the IMP site. Histidine 41 acts as the Proton donor in catalysis. 297-303 (TVTGRSR) contributes to the substrate binding site. Residues arginine 303, 329-331 (KLD), and 411-413 (STS) each bind GTP.

This sequence belongs to the adenylosuccinate synthetase family. As to quaternary structure, homodimer. Requires Mg(2+) as cofactor.

It localises to the cytoplasm. The catalysed reaction is IMP + L-aspartate + GTP = N(6)-(1,2-dicarboxyethyl)-AMP + GDP + phosphate + 2 H(+). It participates in purine metabolism; AMP biosynthesis via de novo pathway; AMP from IMP: step 1/2. Its function is as follows. Plays an important role in the de novo pathway of purine nucleotide biosynthesis. Catalyzes the first committed step in the biosynthesis of AMP from IMP. The chain is Adenylosuccinate synthetase from Phenylobacterium zucineum (strain HLK1).